Consider the following 192-residue polypeptide: Phosphoheptose isomerase (192 aa).

Positions 36–192 (CVDSLAAGGK…DQVEAVAAPA (157 aa)) constitute an SIS domain. 51–53 (NGG) lines the substrate pocket. Positions 60 and 64 each coordinate Zn(2+). Substrate is bound by residues glutamate 64, 93 to 94 (ND), 119 to 121 (TTS), serine 124, and glutamine 171. The Zn(2+) site is built by glutamine 171 and histidine 179.

Belongs to the SIS family. GmhA subfamily. As to quaternary structure, homotetramer. It depends on Zn(2+) as a cofactor.

Its subcellular location is the cytoplasm. The catalysed reaction is 2 D-sedoheptulose 7-phosphate = D-glycero-alpha-D-manno-heptose 7-phosphate + D-glycero-beta-D-manno-heptose 7-phosphate. It participates in carbohydrate biosynthesis; D-glycero-D-manno-heptose 7-phosphate biosynthesis; D-glycero-alpha-D-manno-heptose 7-phosphate and D-glycero-beta-D-manno-heptose 7-phosphate from sedoheptulose 7-phosphate: step 1/1. Functionally, catalyzes the isomerization of sedoheptulose 7-phosphate in D-glycero-D-manno-heptose 7-phosphate. The polypeptide is Phosphoheptose isomerase (Paramagnetospirillum magneticum (strain ATCC 700264 / AMB-1) (Magnetospirillum magneticum)).